A 672-amino-acid chain; its full sequence is 2,4-dienoyl-CoA reductase [(2E)-enoyl-CoA-producing] (672 aa).

FMN contacts are provided by residues 25 to 27, glycine 59, and glutamine 101; that span reads SMH. Tyrosine 167 acts as the Proton donor in catalysis. Arginine 176 is a binding site for substrate. An FMN-binding site is contributed by arginine 215. 253-256 serves as a coordination point for substrate; sequence HEAR. FMN-binding positions include arginine 289 and 311 to 312; that span reads AR. Residues cysteine 335 and cysteine 338 each contribute to the [4Fe-4S] cluster site. Position 340 (glutamine 340) interacts with FAD. NADP(+) is bound at residue glutamine 340. 2 residues coordinate [4Fe-4S] cluster: cysteine 342 and cysteine 354. Alanine 385, aspartate 404, glutamine 412, lysine 422, and valine 449 together coordinate FAD. 563 to 564 lines the NADP(+) pocket; that stretch reads RK. Substrate contacts are provided by lysine 567 and tryptophan 578. Residues glycine 649 and 656–658 contribute to the FAD site; that span reads LDA. NADP(+) is bound at residue 654–656; it reads MEL.

This sequence in the N-terminal section; belongs to the NADH:flavin oxidoreductase/NADH oxidase family. In terms of assembly, monomer. FMN is required as a cofactor. It depends on FAD as a cofactor. The cofactor is [4Fe-4S] cluster.

It catalyses the reaction a 4,5-saturated-(2E)-enoyl-CoA + NADP(+) = a (2E,4E)-dienoyl-CoA + NADPH + H(+). It carries out the reaction a (2E,4Z)-dienoyl-CoA + NADPH + H(+) = a 4,5-saturated-(2E)-enoyl-CoA + NADP(+). The catalysed reaction is (2E)-decenoyl-CoA + NADP(+) = (2E,4E)-decadienoyl-CoA + NADPH + H(+). The enzyme catalyses (2E)-decenoyl-CoA + NADP(+) = (2E,4Z)-decadienoyl-CoA + NADPH + H(+). It participates in lipid metabolism; fatty acid beta-oxidation. Its activity is regulated as follows. Is non-competitively inhibited by NADH. Its function is as follows. Functions as an auxiliary enzyme in the beta-oxidation of unsaturated fatty acids with double bonds at even carbon positions. Catalyzes the NADPH-dependent reduction of the C4-C5 double bond of the acyl chain of 2,4-dienoyl-CoA to yield 2-trans-enoyl-CoA. Acts on both isomers, 2-trans,4-cis- and 2-trans,4-trans-decadienoyl-CoA, with almost equal efficiency. Is not active with NADH instead of NADPH. Does not show cis-&gt;trans isomerase activity. The chain is 2,4-dienoyl-CoA reductase [(2E)-enoyl-CoA-producing] from Escherichia coli (strain K12).